The primary structure comprises 540 residues: DNA-(apurinic or apyrimidinic site) endonuclease (540 aa).

Residues Asn-206 and Glu-239 each contribute to the Mg(2+) site. Residues 256-276 are disordered; sequence NNKVYGGKKNEGEERNRGSVK. Residues 263–276 show a composition bias toward basic and acidic residues; the sequence is KKNEGEERNRGSVK. 4 residues coordinate Mg(2+): Asp-400, Asn-402, Asp-530, and His-531. His-531 acts as the Proton acceptor in catalysis.

This sequence belongs to the DNA repair enzymes AP/ExoA family. Mg(2+) serves as cofactor. Mn(2+) is required as a cofactor. May be proteolytically cleaved.

It is found in the mitochondrion. It catalyses the reaction Exonucleolytic cleavage in the 3'- to 5'-direction to yield nucleoside 5'-phosphates.. Its function is as follows. Multifunctional protein that plays a central role in mitochondrial DNA base excision repair pathway induced by oxidative stress. Has apurinic/apyrimidinic (AP) endonuclease activity towards double-stranded DNA (dsDNA). Has nucleotide incision repair (NIR) activity; acts on dsDNA with oxidized bases thymine glycol and 5,6-dihydro-2'-deoxyuridine. Has 3'-5' exonuclease; can use dsDNA templates with 3'-OH termini including blunt-end, gapped and mismatched 3'-recessed. Has 3'-phosphatase activity; cleaves 3'-phosphate from blunt, recessed and gapped dsDNA templates, followed by 3'-5' exonuclease activity. Has RNase H-like activity; cleaves RNA on 3'-recessed RNA-DNA duplex. Plays a role in merosome infection of host erythrocytes. This Plasmodium berghei (strain Anka) protein is DNA-(apurinic or apyrimidinic site) endonuclease.